We begin with the raw amino-acid sequence, 121 residues long: MLKCTTRHVHIFAGEVTADNNFVPRDDLFTLDVDPDNELVWTDAALQKVYARFEELVEEYRGRDLTEYNIRRIGSDLEHFIRSLLKQGEIAYNLQGRAPNFSMGFPQIPAEEIVGQYIPKG.

This sequence belongs to the complex I NdhM subunit family. NDH-1 can be composed of about 15 different subunits; different subcomplexes with different compositions have been identified which probably have different functions.

The protein localises to the cellular thylakoid membrane. It carries out the reaction a plastoquinone + NADH + (n+1) H(+)(in) = a plastoquinol + NAD(+) + n H(+)(out). It catalyses the reaction a plastoquinone + NADPH + (n+1) H(+)(in) = a plastoquinol + NADP(+) + n H(+)(out). Functionally, NDH-1 shuttles electrons from an unknown electron donor, via FMN and iron-sulfur (Fe-S) centers, to quinones in the respiratory and/or the photosynthetic chain. The immediate electron acceptor for the enzyme in this species is believed to be plastoquinone. Couples the redox reaction to proton translocation, and thus conserves the redox energy in a proton gradient. Cyanobacterial NDH-1 also plays a role in inorganic carbon-concentration. This Synechococcus sp. (strain JA-2-3B'a(2-13)) (Cyanobacteria bacterium Yellowstone B-Prime) protein is NAD(P)H-quinone oxidoreductase subunit M.